A 378-amino-acid polypeptide reads, in one-letter code: Transcription factor YY2 (378 aa).

The mediates transcriptional activation stretch occupies residues 39–113 (LETSVGQTIE…DNLLFSPEFG (75 aa)). Residues 243–378 (EFTSMRPKKP…LTHVKNKNDQ (136 aa)) form a mediates transcriptional repression region. C2H2-type zinc fingers lie at residues 260-284 (IACSHKGCEKMFKDNSAMRKHLHIH), 289-311 (HVCAECGKAFVESSKLKRHQLVH), 317-341 (YQCTFEGCGRRFSLDFNLRTHVRIH), and 347-371 (FVCPFDACNKKFAQSTNLKSHILTH).

Belongs to the YY transcription factor family. As to expression, weakly expressed by neuronal and glial cells in the cerebral cortex. Expressed by Purkinje cells and in the granular layers of the cerebellum. Expressed in all layers of spermatocytes in testis but not detected in sperm cells.

Its subcellular location is the nucleus. Functionally, functions as a multifunctional transcription factor that may exhibit positive and negative control on a large number of genes. May antagonize YY1 and function in development and differentiation. In Mus musculus (Mouse), this protein is Transcription factor YY2 (Yy2).